The following is a 190-amino-acid chain: Large ribosomal subunit protein bL25 (190 aa).

It belongs to the bacterial ribosomal protein bL25 family. CTC subfamily. In terms of assembly, part of the 50S ribosomal subunit; part of the 5S rRNA/L5/L18/L25 subcomplex. Contacts the 5S rRNA. Binds to the 5S rRNA independently of L5 and L18.

Functionally, this is one of the proteins that binds to the 5S RNA in the ribosome where it forms part of the central protuberance. This chain is Large ribosomal subunit protein bL25, found in Neisseria meningitidis serogroup C / serotype 2a (strain ATCC 700532 / DSM 15464 / FAM18).